We begin with the raw amino-acid sequence, 371 residues long: E3 ubiquitin-protein ligase RHF1A (371 aa).

The RING-type; atypical zinc-finger motif lies at 46-87 (CSICLEPFTLQDPSTVTSCKHEYHLQCIIEWSQRSKECPICW). Disordered regions lie at residues 199-254 (HQNS…SSLP) and 348-371 (EANS…GETC). The segment covering 200–225 (QNSNPCPSPGSMTPSPVSGHSSIPAD) has biased composition (polar residues). Residues 226–252 (SNNGSRISPGPSPSRSSQSPKSPEASS) show a composition bias toward low complexity.

As to quaternary structure, interacts with KRP6. In terms of tissue distribution, expressed in stems, flowers, green siliques, cauline leaves, seeds and roots.

It catalyses the reaction S-ubiquitinyl-[E2 ubiquitin-conjugating enzyme]-L-cysteine + [acceptor protein]-L-lysine = [E2 ubiquitin-conjugating enzyme]-L-cysteine + N(6)-ubiquitinyl-[acceptor protein]-L-lysine.. Its pathway is protein modification; protein ubiquitination. In terms of biological role, E3 ubiquitin-protein ligase involved in the positive regulation of the gametogenesis progression. Mediates the proteasomal degradation of KRP6, a cyclin-dependent kinase inhibitor which accumulates during meiosis and blocks the progression of subsequent mitoses during gametophyte development. Functions in association with RHF2A. Possesses E3 ubiquitin-protein ligase activity when associated with the E2 enzyme UBC8 in vitro. This Arabidopsis thaliana (Mouse-ear cress) protein is E3 ubiquitin-protein ligase RHF1A.